A 530-amino-acid chain; its full sequence is GMP synthase [glutamine-hydrolyzing] (530 aa).

Residues 18 to 207 (TILVLDFGSQ…AVDICQAKTN (190 aa)) enclose the Glutamine amidotransferase type-1 domain. The Nucleophile role is filled by Cys-94. Active-site residues include His-181 and Glu-183. The GMPS ATP-PPase domain maps to 208-405 (WSMENFIDTE…LGVPEDLVWR (198 aa)). 236–242 (SGGVDST) lines the ATP pocket. The XMP site is built by Arg-309, Asp-467, Lys-522, and Glu-528.

In terms of assembly, homodimer. Requires Mg(2+) as cofactor.

The protein localises to the cytoplasm. The protein resides in the cytosol. It catalyses the reaction XMP + L-glutamine + ATP + H2O = GMP + L-glutamate + AMP + diphosphate + 2 H(+). The protein operates within purine metabolism; GMP biosynthesis; GMP from XMP (L-Gln route): step 1/1. In terms of biological role, catalyzes the conversion of xanthine monophosphate (XMP) to GMP in the presence of glutamine and ATP through an adenyl-XMP intermediate. This is GMP synthase [glutamine-hydrolyzing] (GUA1) from Candida albicans (strain SC5314 / ATCC MYA-2876) (Yeast).